Consider the following 756-residue polypeptide: MTTSHILGFPRVGAKRELKFAQERYWRKELAEQDLLDLAKALREKNWKHQAAANADFVAVGDFTFYDHILDLQVATGAIPARFGFDSQNLTLDQYFQLARGNKDQFAIEMTKWFDTNYHYLVPEFQKSTAFKANPAHYVNQIREAKALGLNFKPVIVGPLTFLWLGKEKGEAFNRFDLLNQLVPVYVEILNALVAEGAEWIQIDEPALALDLPAEWVEAYKSVYAELSKVNAKLLLATYFGSVAEHAELLKALPVAGLHLDLVRAPEQLAAFEDYSKVLSAGVIEGRNIWRANLNKVLDVLEPLKAKLGERLWIAPSCSLLHTPFDLEVEVQLKEKNTALYSWLSFTLQKVEELNVLKQALNNGRASVQAALDASQAAADARATSKEIHRPEVAERLANLPKGADQRKSPFAERIVKQNAWLNLPLLPTTNIGSFPQTTEIRHARASFKKGELSLADYEAAMKKEIEYVVRRQEELDLDVLVHGEAERNDMVEYFGELLDGFAFTKFGWVQSYGSRCVKPPVIYGDVIRPEPMTVRWSQYAQSLTNRVMKGMLTGPVTILQWSFVRNDIPRSTVCKQIGVALSDEVLDLEAAGIKVIQIDEPAIREGLPLKRADWDAYLQWAGEAFRLSSMGVQDDTQIHTHMCYSEFNDILPAIAALDADVITIETSRSDMELLTAFADFKYPNDIGPGVYDIHSPRVPTATEVEHLLRKALNVIPKERLWVNPDCGLKTRGWTETIDQLKVMVDVTKKLRAELA.

Residues 16 to 19 (RELK) and Lys112 contribute to the 5-methyltetrahydropteroyltri-L-glutamate site. Residues 432 to 434 (IGS) and Glu485 contribute to the L-homocysteine site. L-methionine contacts are provided by residues 432-434 (IGS) and Glu485. 5-methyltetrahydropteroyltri-L-glutamate is bound by residues 516 to 517 (RC) and Trp562. L-homocysteine is bound at residue Asp600. An L-methionine-binding site is contributed by Asp600. Glu606 lines the 5-methyltetrahydropteroyltri-L-glutamate pocket. 3 residues coordinate Zn(2+): His642, Cys644, and Glu666. Residue His695 is the Proton donor of the active site. Position 727 (Cys727) interacts with Zn(2+).

It belongs to the vitamin-B12 independent methionine synthase family. Zn(2+) is required as a cofactor.

The catalysed reaction is 5-methyltetrahydropteroyltri-L-glutamate + L-homocysteine = tetrahydropteroyltri-L-glutamate + L-methionine. It functions in the pathway amino-acid biosynthesis; L-methionine biosynthesis via de novo pathway; L-methionine from L-homocysteine (MetE route): step 1/1. In terms of biological role, catalyzes the transfer of a methyl group from 5-methyltetrahydrofolate to homocysteine resulting in methionine formation. This is 5-methyltetrahydropteroyltriglutamate--homocysteine methyltransferase from Haemophilus influenzae (strain PittGG).